Consider the following 618-residue polypeptide: Proline--tRNA ligase (618 aa).

Belongs to the class-II aminoacyl-tRNA synthetase family. ProS type 1 subfamily. Homodimer.

The protein localises to the cytoplasm. It catalyses the reaction tRNA(Pro) + L-proline + ATP = L-prolyl-tRNA(Pro) + AMP + diphosphate. In terms of biological role, catalyzes the attachment of proline to tRNA(Pro) in a two-step reaction: proline is first activated by ATP to form Pro-AMP and then transferred to the acceptor end of tRNA(Pro). As ProRS can inadvertently accommodate and process non-cognate amino acids such as alanine and cysteine, to avoid such errors it has two additional distinct editing activities against alanine. One activity is designated as 'pretransfer' editing and involves the tRNA(Pro)-independent hydrolysis of activated Ala-AMP. The other activity is designated 'posttransfer' editing and involves deacylation of mischarged Ala-tRNA(Pro). The misacylated Cys-tRNA(Pro) is not edited by ProRS. The protein is Proline--tRNA ligase of Streptococcus pyogenes serotype M12 (strain MGAS2096).